Here is a 319-residue protein sequence, read N- to C-terminus: Acetyl-coenzyme A carboxylase carboxyl transferase subunit alpha (319 aa).

The CoA carboxyltransferase C-terminal domain maps to 32-293 (NVDAEVRALR…KAVLLNELDA (262 aa)).

This sequence belongs to the AccA family. In terms of assembly, acetyl-CoA carboxylase is a heterohexamer composed of biotin carboxyl carrier protein (AccB), biotin carboxylase (AccC) and two subunits each of ACCase subunit alpha (AccA) and ACCase subunit beta (AccD).

It is found in the cytoplasm. The enzyme catalyses N(6)-carboxybiotinyl-L-lysyl-[protein] + acetyl-CoA = N(6)-biotinyl-L-lysyl-[protein] + malonyl-CoA. It functions in the pathway lipid metabolism; malonyl-CoA biosynthesis; malonyl-CoA from acetyl-CoA: step 1/1. Component of the acetyl coenzyme A carboxylase (ACC) complex. First, biotin carboxylase catalyzes the carboxylation of biotin on its carrier protein (BCCP) and then the CO(2) group is transferred by the carboxyltransferase to acetyl-CoA to form malonyl-CoA. The polypeptide is Acetyl-coenzyme A carboxylase carboxyl transferase subunit alpha (Xanthomonas campestris pv. campestris (strain B100)).